The chain runs to 333 residues: PRKC apoptosis WT1 regulator protein (333 aa).

Low complexity-rich tracts occupy residues 1-14 (MATGGYRSGGSTTT), 33-51 (PAGPGSSGGDPAAKSPAGS), 66-80 (GPAGAAAPAAPAPGA), and 105-116 (PSAAAASGAPGS). The segment at 1-262 (MATGGYRSGG…ASFSSSSTLE (262 aa)) is disordered. The short motif at 62 to 66 (ELNHG) is the B30.2/SPRY domain-binding motif element. The short motif at 138–154 (RKGKGQIEKRKLREKRR) is the Nuclear localization signal element. The tract at residues 138–196 (RKGKGQIEKRKLREKRRSTGVVNIPAAECLDEYEDDEAGQKERKREDAITQQNTIQNEA) is selective for apoptosis induction in cancer cells (SAC). T156 is subject to Phosphothreonine; by PKA. The segment covering 175–185 (AGQKERKREDA) has biased composition (basic and acidic residues). Polar residues predominate over residues 186 to 196 (ITQQNTIQNEA). Phosphoserine is present on S224. Residues 235 to 248 (PRTDRSGFSRHNRD) are compositionally biased toward basic and acidic residues. A coiled-coil region spans residues 255 to 333 (FSSSSTLEKR…LLKVVGQLTR (79 aa)). Residues 293 to 333 (IGKLKEEIDLLNRDLDDMEDENEQLKQENKTLLKVVGQLTR) are leucine-zipper.

Homooligomer. Interacts (via the C-terminal region) with WT1. Interacts with THAP1. Interacts with AATF. Interacts with BACE1. Interacts with SPSB1 (via B30.2/SPRY domain); this interaction is direct and occurs in association with the Elongin BC complex. Interacts with SPSB2 (via B30.2/SPRY domain); this interaction occurs in association with the Elongin BC complex. Interacts with SPSB4 (via B30.2/SPRY domain); this interaction occurs in association with the Elongin BC complex. Component of a ternary complex composed of SQSTM1 and PRKCZ. Interacts with actin. Post-translationally, preferentially phosphorylated at the Thr-156 by PKC in cancer cells.

It localises to the cytoplasm. The protein resides in the nucleus. In terms of biological role, pro-apoptotic protein capable of selectively inducing apoptosis in cancer cells, sensitizing the cells to diverse apoptotic stimuli and causing regression of tumors in animal models. Induces apoptosis in certain cancer cells by activation of the Fas prodeath pathway and coparallel inhibition of NF-kappa-B transcriptional activity. Inhibits the transcriptional activation and augments the transcriptional repression mediated by WT1. Down-regulates the anti-apoptotic protein BCL2 via its interaction with WT1. Also seems to be a transcriptional repressor by itself. May be directly involved in regulating the amyloid precursor protein (APP) cleavage activity of BACE1. This Mus musculus (Mouse) protein is PRKC apoptosis WT1 regulator protein (Pawr).